The primary structure comprises 113 residues: Putative pterin-4-alpha-carbinolamine dehydratase (113 aa).

It belongs to the pterin-4-alpha-carbinolamine dehydratase family.

It catalyses the reaction (4aS,6R)-4a-hydroxy-L-erythro-5,6,7,8-tetrahydrobiopterin = (6R)-L-erythro-6,7-dihydrobiopterin + H2O. This chain is Putative pterin-4-alpha-carbinolamine dehydratase, found in Hydrogenovibrio crunogenus (strain DSM 25203 / XCL-2) (Thiomicrospira crunogena).